A 473-amino-acid chain; its full sequence is Levansucrase (473 aa).

The N-terminal stretch at 1 to 29 (MNIKKFAKQATVLTFTTALLAGGATQAFA) is a signal peptide. Positions 85, 86, and 164 each coordinate sucrose. Residue Asp86 is the Nucleophile of the active site. A Ca(2+)-binding site is contributed by Asp241. 2 residues coordinate sucrose: Arg246 and Asp247. Residues Gln272, Leu308, Asn310, and Asp339 each coordinate Ca(2+). Glu340 contributes to the sucrose binding site. Glu342 functions as the Proton donor/acceptor in the catalytic mechanism. Arg360 is a sucrose binding site.

It belongs to the glycosyl hydrolase 68 family. Monomer.

The protein resides in the secreted. The catalysed reaction is [6)-beta-D-fructofuranosyl-(2-&gt;](n) alpha-D-glucopyranoside + sucrose = [6)-beta-D-fructofuranosyl-(2-&gt;](n+1) alpha-D-glucopyranoside + D-glucose. With respect to regulation, ca(2+) may play an important structural role and promote stability of levansucrase. The enzyme concentration is a factor defining the molecular weight (MW) levan distribution. A bimodal distribution is reported at the usual enzyme concentrations. At low concentrations, the enzyme synthesizes high MW levan, and at high concentrations, it synthesizes low MW levan. Functionally, catalyzes the synthesis of levan, a fructose polymer, by transferring the fructosyl moiety from sucrose to a growing acceptor molecule. Also displays sucrose hydrolase activity. At low sucrose concentrations, functions as an hydrolase with water as acceptor, whereas at higher substrate concentrations it adds fructosyl units to a growing levan chain. The protein is Levansucrase of Bacillus subtilis (strain 168).